We begin with the raw amino-acid sequence, 120 residues long: MTETVNSARATARFVRVSPMKARRVIDLVRGKSVEDALAILKYAPQAASEDVAKVVASAAANAENNFGLDPRTLVISEAYADEGPTMRRFRPRAQGRAFHIRKRSSHITVVVESQKGSAQ.

This sequence belongs to the universal ribosomal protein uL22 family. As to quaternary structure, part of the 50S ribosomal subunit.

In terms of biological role, this protein binds specifically to 23S rRNA; its binding is stimulated by other ribosomal proteins, e.g. L4, L17, and L20. It is important during the early stages of 50S assembly. It makes multiple contacts with different domains of the 23S rRNA in the assembled 50S subunit and ribosome. Its function is as follows. The globular domain of the protein is located near the polypeptide exit tunnel on the outside of the subunit, while an extended beta-hairpin is found that lines the wall of the exit tunnel in the center of the 70S ribosome. The chain is Large ribosomal subunit protein uL22 from Corynebacterium urealyticum (strain ATCC 43042 / DSM 7109).